The primary structure comprises 163 residues: UPF0478 protein SAB1599c (163 aa).

Residues 7–27 traverse the membrane as a helical segment; it reads IAGIIAAIAFLILCIGIVAVL.

The protein belongs to the UPF0478 family.

It localises to the cell membrane. The polypeptide is UPF0478 protein SAB1599c (Staphylococcus aureus (strain bovine RF122 / ET3-1)).